The chain runs to 101 residues: Urease subunit beta (101 aa).

Belongs to the urease beta subunit family. Heterotrimer of UreA (gamma), UreB (beta) and UreC (alpha) subunits. Three heterotrimers associate to form the active enzyme.

The protein localises to the cytoplasm. The enzyme catalyses urea + 2 H2O + H(+) = hydrogencarbonate + 2 NH4(+). It participates in nitrogen metabolism; urea degradation; CO(2) and NH(3) from urea (urease route): step 1/1. In Sinorhizobium medicae (strain WSM419) (Ensifer medicae), this protein is Urease subunit beta.